Reading from the N-terminus, the 414-residue chain is Phosphoglycerate kinase (414 aa).

Substrate contacts are provided by residues 20 to 22 (DIN), Arg37, 60 to 63 (HQSR), Arg117, and Arg164. ATP is bound by residues Glu338 and 364-367 (GGHL).

It belongs to the phosphoglycerate kinase family. As to quaternary structure, monomer.

The protein localises to the cytoplasm. The catalysed reaction is (2R)-3-phosphoglycerate + ATP = (2R)-3-phospho-glyceroyl phosphate + ADP. It participates in carbohydrate degradation; glycolysis; pyruvate from D-glyceraldehyde 3-phosphate: step 2/5. The polypeptide is Phosphoglycerate kinase (Methanococcus maripaludis (strain DSM 14266 / JCM 13030 / NBRC 101832 / S2 / LL)).